A 161-amino-acid polypeptide reads, in one-letter code: MAEVANNEQQAPQFNIQRVYTKDVSFETPNSPAVFQKEWNPEVKLDLDTRSAKLADDVYEVVLSLTVTAQNGGDTAFLCEVQQAGIFSITGLTEPQLAHSLGAYCPNILFPYARETVGSLVGRGTFPQLNLAPVNFDALFAQYVQQRQAAATAPAAEEANA.

It belongs to the SecB family. Homotetramer, a dimer of dimers. One homotetramer interacts with 1 SecA dimer.

It is found in the cytoplasm. Its function is as follows. One of the proteins required for the normal export of preproteins out of the cell cytoplasm. It is a molecular chaperone that binds to a subset of precursor proteins, maintaining them in a translocation-competent state. It also specifically binds to its receptor SecA. The protein is Protein-export protein SecB of Shewanella baltica (strain OS223).